Consider the following 723-residue polypeptide: Delta-like protein 1 (723 aa).

Residues 1–17 (MGSRCALALAVLSALLC) form the signal peptide. The Extracellular portion of the chain corresponds to 18-545 (QVWSSGVFEL…LEGQGGPFPW (528 aa)). One can recognise a DSL domain in the interval 177–221 (FVCDEHYYGEGCSVFCRPRDDAFGHFTCGERGEKVCNPGWKGPYC). Intrachain disulfides connect cysteine 179–cysteine 188, cysteine 192–cysteine 204, cysteine 212–cysteine 221, cysteine 226–cysteine 237, cysteine 230–cysteine 243, cysteine 245–cysteine 254, cysteine 257–cysteine 268, cysteine 263–cysteine 274, cysteine 276–cysteine 285, cysteine 292–cysteine 304, cysteine 298–cysteine 314, cysteine 316–cysteine 325, cysteine 332–cysteine 343, cysteine 337–cysteine 352, cysteine 354–cysteine 363, cysteine 370–cysteine 381, cysteine 375–cysteine 391, cysteine 393–cysteine 402, cysteine 409–cysteine 420, cysteine 414–cysteine 429, cysteine 431–cysteine 440, cysteine 447–cysteine 458, cysteine 452–cysteine 467, cysteine 469–cysteine 478, cysteine 485–cysteine 496, cysteine 490–cysteine 505, and cysteine 507–cysteine 516. EGF-like domains are found at residues 226–254 (CLPGCDEQHGFCDKPGECKCRVGWQGRYC), 257–285 (CIRYPGCLHGTCQQPWQCNCQEGWGGLFC), and 292–325 (CTHHKPCKNGATCTNTGQGSYTCSCRPGYTGATC). Residues 332–363 (CDPSPCKNGGSCTDLENSYSCTCPPGFYGKIC) form the EGF-like 4; calcium-binding domain. 2 EGF-like domains span residues 370–402 (CADGPCFNGGRCSDSPDGGYSCRCPVGYSGFNC) and 409–440 (CSSSPCSNGAKCVDLGDAYLCRCQAGFSGRHC). An EGF-like 7; calcium-binding domain is found at 447-478 (CASSPCANGGTCRDGVNDFSCTCPPGYTGRNC). Asparagine 477 is a glycosylation site (N-linked (GlcNAc...) asparagine). An EGF-like 8 domain is found at 485–516 (CEHAPCHNGATCHERGHRYVCECARGYGGPNC). The helical transmembrane segment at 546 to 568 (VAVCAGVILVLMLLLGCAAVVVC) threads the bilayer. Topologically, residues 569 to 723 (VRLRLQKHRP…KDECVIATEV (155 aa)) are cytoplasmic. Lysine 613 participates in a covalent cross-link: Glycyl lysine isopeptide (Lys-Gly) (interchain with G-Cter in ubiquitin). Basic and acidic residues predominate over residues 653–664 (AVRDAHSKRDTK). Residues 653-702 (AVRDAHSKRDTKCQPQGSSGEEKGTPTTLRGGEASERKRPDSGCSTSKDT) are disordered. At serine 694 the chain carries Phosphoserine; by PKB. The residue at position 697 (serine 697) is a Phosphoserine. The tract at residues 720-723 (ATEV) is interaction with MAGI1.

As to quaternary structure, homodimer. Interacts with TJP1. Interacts with MAGI1 (via PDZ domain); forms a complex with CTNNB1 and CDH2 and promotes recruitment to the adherens junction and stabilization on the cell surface. Interacts with PSEN1; undergoes a presenilin-dependent gamma-secretase cleavage that releases a Dll1-intracellular form. Interacts with MFAP5. Interacts with MIB1. Interacts with NEURL1B; leads to ubiquitination. Interacts with NEURL1. Interacts with SYNJ2BP; enhances DLL1 protein stability, and promotes Notch signaling in endothelial cells. Interacts with MAGI1, MAGI2, MAGI3 and MPDZ. Interacts (via ubiquitin) with EPN1 (via IUM domain); binding with NOTCH1 attached to neighboring cell, promotes ligand ubiquitination and EPN1 interaction, leading to NECD transendocytosis and Notch signaling. Interacts with NOTCH1. Interacts with NOTCH2NLB; leading to promote Notch signaling pathway in a cell-autonomous manner through inhibition of cis DLL1-NOTCH2 interactions. Ubiquitinated by MIB (MIB1 or MIB2), leading to its endocytosis and subsequent degradation. Ubiquitinated; promotes recycling back to the plasma membrane and confers a strong affinity for NOTCH1. Multi-ubiquitination of Lys-613 by MIB1 promotes both cis and trans-interaction with NOTCH1, as well as activation of Notch signaling. Ubiquitinated by NEURL1B. In terms of processing, phosphorylated in a membrane association-dependent manner. Phosphorylation at Ser-697 requires the presence of Ser-694, whereas phosphorylation at Ser-694 occurs independently of the other site. Phosphorylation is required for full ligand activity in vitro and affects surface presentation, ectodomain shedding, and endocytosis. Post-translationally, O-fucosylated. Can be elongated to a disaccharide by MFNG. Expressed in heart and pancreas, with lower expression in brain and muscle and almost no expression in placenta, lung, liver and kidney.

The protein localises to the apical cell membrane. The protein resides in the cell junction. Its subcellular location is the adherens junction. It localises to the membrane raft. In terms of biological role, transmembrane ligand protein of NOTCH1, NOTCH2 and NOTCH3 receptors that binds the extracellular domain (ECD) of Notch receptor in a cis and trans fashion manner. Following transinteraction, ligand cells produce mechanical force that depends of a clathrin-mediated endocytosis, requiring ligand ubiquitination, EPN1 interaction, and actin polymerisation; these events promote Notch receptor extracellular domain (NECD) transendocytosis and triggers Notch signaling through induction of cleavage, hyperphosphorylation, and nuclear accumulation of the intracellular domain of Notch receptors (NICD). Is required for embryonic development and maintenance of adult stem cells in many different tissues and immune systeme; the DLL1-induced Notch signaling is mediated through an intercellular communication that regulates cell lineage, cell specification, cell patterning and morphogenesis through effects on differentiation and proliferation. Plays a role in brain development at different level, namely by regulating neuronal differentiation of neural precursor cells via cell-cell interaction, most likely through the lateral inhibitory system in an endogenous level dependent-manner. During neocortex development, Dll1-Notch signaling transmission is mediated by dynamic interactions between intermediate neurogenic progenitors and radial glia; the cell-cell interactions are mediated via dynamic and transient elongation processes, likely to reactivate/maintain Notch activity in neighboring progenitors, and coordinate progenitor cell division and differentiation across radial and zonal boundaries. During cerebellar development, regulates Bergmann glial monolayer formation and its morphological maturation through a Notch signaling pathway. At the retina and spinal cord level, regulates neurogenesis by preventing the premature differentiation of neural progenitors and also by maintaining progenitors in spinal cord through Notch signaling pathway. Also controls neurogenesis of the neural tube in a progenitor domain-specific fashion along the dorsoventral axis. Maintains quiescence of neural stem cells and plays a role as a fate determinant that segregates asymmetrically to one daughter cell during neural stem cells mitosis, resulting in neuronal differentiation in Dll1-inheriting cell. Plays a role in immune systeme development, namely the development of all T-cells and marginal zone (MZ) B-cells. Blocks the differentiation of progenitor cells into the B-cell lineage while promoting the emergence of a population of cells with the characteristics of a T-cell/NK-cell precursor. Also plays a role during muscle development. During early development, inhibits myoblasts differentiation from the medial dermomyotomal lip and later regulates progenitor cell differentiation. Directly modulates cell adhesion and basal lamina formation in satellite cells through Notch signaling. Maintains myogenic progenitors pool by suppressing differentiation through down-regulation of MYOD1 and is required for satellite cell homing and PAX7 expression. During craniofacial and trunk myogenesis suppresses differentiation of cranial mesoderm-derived and somite-derived muscle via MYOD1 regulation but in cranial mesoderm-derived progenitors, is neither required for satellite cell homing nor for PAX7 expression. Also plays a role during pancreatic cell development. During type B pancreatic cell development, may be involved in the initiation of proximodistal patterning in the early pancreatic epithelium. Stimulates multipotent pancreatic progenitor cells proliferation and pancreatic growth by maintaining HES1 expression and PTF1A protein levels. During fetal stages of development, is required to maintain arterial identity and the responsiveness of arterial endothelial cells for VEGFA through regulation of KDR activation and NRP1 expression. Controls sprouting angiogenesis and subsequent vertical branch formation through regulation on tip cell differentiation. Negatively regulates goblet cell differentiation in intestine and controls secretory fat commitment through lateral inhibition in small intestine. Plays a role during inner ear development; negatively regulates auditory hair cell differentiation. Plays a role during nephron development through Notch signaling pathway. Regulates growth, blood pressure and energy homeostasis. The chain is Delta-like protein 1 from Homo sapiens (Human).